The chain runs to 549 residues: MSLVACECLPSPGLEPEPCSRARSQACVYLEQIRNRVALGVPDMTKRDYLVDAATQIRLALERDVSEDYEAAFNHYQNGVDVLLRGIHVDPNKERREAVKLKITKYLRRAEEIFNCHLQRPLSSGASPSTGFSSLRLRPIRTLGSAVEQLRGCRVVGVIEKVQLVQDSATGGTFVVKSLPRCHMVSRERLTIIPHGVPYMTKLLRYFMSEDSIFLHLEHVQGGTLWSHLLSQAHPRHSGLSSGSTQERMKAQLNPHLNLLTPARLPSGHAPGKDRIALEPPRTSPSLPLAGEAPSIRPQREAEGEPTARTSTSGSSDLPKAPGGHLHLQARRAGQNSDAGPPRGLTWVPEGAGPVLGGCGRGMDQSCLSADGAGRGCGRATWSVREEQVKQWAAETLVALEALHEQGVLCRDLHPGNLLLDQAGHIRLTYFGQWSEVEPQCCGEAVDNLYSAPEVGGISELTEACDWWSFGSLLYELLTGMALSQSHPSGIQAHTQLQLPEWLSRPAASLLTELLQFEPTRRLGMGEGGVSKLKSHPFFSTIQWSKLVG.

The 29-residue stretch at 87-115 folds into the MIT domain; the sequence is IHVDPNKERREAVKLKITKYLRRAEEIFN. In terms of domain architecture, Protein kinase spans 145–539; the sequence is SAVEQLRGCR…VSKLKSHPFF (395 aa). ATP contacts are provided by residues 151 to 159 and lysine 177; that span reads RGCRVVGVI. The interval 260-325 is disordered; that stretch reads LTPARLPSGH…SDLPKAPGGH (66 aa). Aspartate 412 serves as the catalytic Proton acceptor.

It belongs to the protein kinase superfamily. Ser/Thr protein kinase family. S6 kinase subfamily.

The enzyme catalyses L-seryl-[protein] + ATP = O-phospho-L-seryl-[protein] + ADP + H(+). It catalyses the reaction L-threonyl-[protein] + ATP = O-phospho-L-threonyl-[protein] + ADP + H(+). In Pongo abelii (Sumatran orangutan), this protein is Ribosomal protein S6 kinase-like 1 (RPS6KL1).